Here is a 546-residue protein sequence, read N- to C-terminus: CTP synthase (546 aa).

The interval 1 to 265 is amidoligase domain; it reads MTKYVFVTGG…DEIVCHKLNI (265 aa). Position 13 (Ser-13) interacts with CTP. Ser-13 is a binding site for UTP. ATP is bound by residues 14–19 and Asp-71; that span reads SLGKGI. Residues Asp-71 and Glu-139 each coordinate Mg(2+). CTP is bound by residues 146–148, 186–191, and Lys-222; these read DIE and KTKPTQ. Residues 186 to 191 and Lys-222 each bind UTP; that span reads KTKPTQ. The 254-residue stretch at 290–543 folds into the Glutamine amidotransferase type-1 domain; sequence KIAFVGKYVD…VKAALANQKA (254 aa). Residue Gly-351 participates in L-glutamine binding. Catalysis depends on Cys-378, which acts as the Nucleophile; for glutamine hydrolysis. L-glutamine is bound by residues 379-382, Glu-402, and Arg-469; that span reads LGMQ. Catalysis depends on residues His-516 and Glu-518.

It belongs to the CTP synthase family. In terms of assembly, homotetramer.

It catalyses the reaction UTP + L-glutamine + ATP + H2O = CTP + L-glutamate + ADP + phosphate + 2 H(+). It carries out the reaction L-glutamine + H2O = L-glutamate + NH4(+). The catalysed reaction is UTP + NH4(+) + ATP = CTP + ADP + phosphate + 2 H(+). The protein operates within pyrimidine metabolism; CTP biosynthesis via de novo pathway; CTP from UDP: step 2/2. Its activity is regulated as follows. Allosterically activated by GTP, when glutamine is the substrate; GTP has no effect on the reaction when ammonia is the substrate. The allosteric effector GTP functions by stabilizing the protein conformation that binds the tetrahedral intermediate(s) formed during glutamine hydrolysis. Inhibited by the product CTP, via allosteric rather than competitive inhibition. In terms of biological role, catalyzes the ATP-dependent amination of UTP to CTP with either L-glutamine or ammonia as the source of nitrogen. Regulates intracellular CTP levels through interactions with the four ribonucleotide triphosphates. This is CTP synthase from Dechloromonas aromatica (strain RCB).